Reading from the N-terminus, the 328-residue chain is Malate dehydrogenase (328 aa).

11–17 (GAAGQIG) contributes to the NAD(+) binding site. Residues Arg94 and Arg100 each coordinate substrate. NAD(+) is bound by residues Asn107, Gln114, and 131 to 133 (VGN). Residues Asn133 and Arg164 each contribute to the substrate site. His189 functions as the Proton acceptor in the catalytic mechanism.

It belongs to the LDH/MDH superfamily. MDH type 2 family.

It catalyses the reaction (S)-malate + NAD(+) = oxaloacetate + NADH + H(+). Its function is as follows. Catalyzes the reversible oxidation of malate to oxaloacetate. The protein is Malate dehydrogenase of Xylella fastidiosa (strain M23).